A 660-amino-acid polypeptide reads, in one-letter code: Arginine--tRNA ligase, cytoplasmic (660 aa).

Position 1 is an N-acetylmethionine (Met-1). Residues 1–72 are could be involved in the assembly of the multisynthetase complex; it reads MDGLVAQCSA…QAERKRPTKN (72 aa). L-arginine-binding positions include 200 to 202, His-211, Tyr-384, Asp-388, and Gln-412; that span reads SPN. A 'HIGH' region motif is present at residues 201–212; it reads PNIAKEMHVGHL. The segment at 529 to 543 is interaction with tRNA; sequence NTAAYLLYAFTRIRS.

The protein belongs to the class-I aminoacyl-tRNA synthetase family. Interacts (via N-terminus) with AIMP1 (via N-terminus); this stimulates its catalytic activity. Interacts (via N-terminus) with LARS2 (via C-terminus). Monomer. Part of a multisubunit complex that groups tRNA ligases for Arg (RARS1), Asp (DARS1), Gln (QARS1), Ile (IARS1), Leu (LARS1), Lys (KARS1), Met (MARS1) the bifunctional ligase for Glu and Pro (EPRS1) and the auxiliary subunits AIMP1/p43, AIMP2/p38 and EEF1E1/p18. Interacts with QARS1. Part of a complex composed of RARS1, QARS1 and AIMP1. In terms of tissue distribution, detected in dorsal root ganglion.

Its subcellular location is the cytoplasm. The protein resides in the cytosol. The catalysed reaction is tRNA(Arg) + L-arginine + ATP = L-arginyl-tRNA(Arg) + AMP + diphosphate. Its function is as follows. Forms part of a macromolecular complex that catalyzes the attachment of specific amino acids to cognate tRNAs during protein synthesis. Modulates the secretion of AIMP1 and may be involved in generation of the inflammatory cytokine EMAP2 from AIMP1. The polypeptide is Arginine--tRNA ligase, cytoplasmic (Rars1) (Rattus norvegicus (Rat)).